Here is a 67-residue protein sequence, read N- to C-terminus: SPbeta prophage-derived uncharacterized protein YoqK (67 aa).

The sequence is that of SPbeta prophage-derived uncharacterized protein YoqK (yoqK) from Bacillus subtilis (strain 168).